Reading from the N-terminus, the 397-residue chain is Tryptophan synthase beta chain (397 aa).

The residue at position 86 (Lys86) is an N6-(pyridoxal phosphate)lysine.

This sequence belongs to the TrpB family. In terms of assembly, tetramer of two alpha and two beta chains. The cofactor is pyridoxal 5'-phosphate.

It carries out the reaction (1S,2R)-1-C-(indol-3-yl)glycerol 3-phosphate + L-serine = D-glyceraldehyde 3-phosphate + L-tryptophan + H2O. Its pathway is amino-acid biosynthesis; L-tryptophan biosynthesis; L-tryptophan from chorismate: step 5/5. The beta subunit is responsible for the synthesis of L-tryptophan from indole and L-serine. In Aeromonas hydrophila subsp. hydrophila (strain ATCC 7966 / DSM 30187 / BCRC 13018 / CCUG 14551 / JCM 1027 / KCTC 2358 / NCIMB 9240 / NCTC 8049), this protein is Tryptophan synthase beta chain.